Reading from the N-terminus, the 436-residue chain is MSKALPLVTRHGDRIAIVNGLRTPFAKQATAYHGIPAVDLGKTAVSELLARTGIDPALIEQLVFGQVVQMPEAPNIAREIVLGTGMSVHTDAYSVSRACATSFQAIANVAESIMAGSISIGIAGGADSSSVLPIGVSKALARTLVDVNKARTLSQRLKLFSRLKFRDLMPVPPAVAEYSTGLRMGDTAEQMAKSHGITREEQDALAHRSHQLAAKAWEQGLLHDEVMTAYVPPYRTQISEDNNVRKDSSLASYAKLKPAFDRKHGSVTAANSTPLTDGAAAVLMMSESRAKELGLQPLGYLRSFAFSAIDVWEDMLLGPSYATPLALDRAGIGLADLTLIDMHEAFAAQTLANLKMFASDEFAQQKLGRSRAIGEVDMDKFNVLGGSIAYGHPFAATGARMITQTLHELKRRGGGLGLTTACAAGGLGAAMIVEVE.

The Acyl-thioester intermediate role is filled by Cys-99. Residues His-392 and Cys-422 each act as proton acceptor in the active site.

This sequence belongs to the thiolase-like superfamily. Thiolase family. As to quaternary structure, heterotetramer of two alpha chains (FadJ) and two beta chains (FadI).

The protein resides in the cytoplasm. The enzyme catalyses an acyl-CoA + acetyl-CoA = a 3-oxoacyl-CoA + CoA. It participates in lipid metabolism; fatty acid beta-oxidation. Catalyzes the final step of fatty acid oxidation in which acetyl-CoA is released and the CoA ester of a fatty acid two carbons shorter is formed. The chain is 3-ketoacyl-CoA thiolase from Serratia proteamaculans (strain 568).